We begin with the raw amino-acid sequence, 633 residues long: Rab11 family-interacting protein 4 (633 aa).

2 consecutive EF-hand domains span residues 17–52 (LFLQ…FAQG) and 50–85 (AQGD…MKGC). 7 residues coordinate Ca(2+): aspartate 30, aspartate 32, aspartate 34, aspartate 63, asparagine 65, arginine 69, and aspartate 74. Disordered regions lie at residues 152–182 (SDLD…LGSL) and 218–257 (GEGE…QTPR). Residues 238-254 (TNALSDLGSSVPSSAGQ) show a composition bias toward polar residues. Residues 410-613 (AREKGTEIVL…EEINYRLRQY (204 aa)) are a coiled coil. One can recognise an FIP-RBD domain in the interval 570 to 632 (EAKSLFSTQT…DHNPSILEIK (63 aa)).

As to quaternary structure, homodimer. Forms a complex with Rab11 (rab11a or rab11b) and arf6.

The protein localises to the recycling endosome membrane. It is found in the cleavage furrow. Its subcellular location is the midbody. The protein resides in the cytoplasmic vesicle. In terms of biological role, acts as a regulator of endocytic traffic by participating in membrane delivery. Required for the abscission step in cytokinesis, possibly by acting as an 'address tag' delivering recycling endosome membranes to the cleavage furrow during late cytokinesis. The chain is Rab11 family-interacting protein 4 (rab11fip4) from Xenopus tropicalis (Western clawed frog).